The sequence spans 357 residues: Probable glutamine amidotransferase DUG3 (357 aa).

The active-site For GATase activity is Cys-2. The Glutamine amidotransferase type-2 domain occupies 2–260; the sequence is CRFLIFKGKQ…PGEYRVERLD (259 aa).

The protein belongs to the DUG3 family. Component of the GSH degradosomal complex composed of at least DUG1, DUG2 and DUG3.

It is found in the cytoplasm. Its function is as follows. Component of the GSH degradosomal complex involved in the degradation of glutathione (GSH) and other peptides containing a gamma-glu-X bond. In Saccharomyces cerevisiae (strain ATCC 204508 / S288c) (Baker's yeast), this protein is Probable glutamine amidotransferase DUG3 (DUG3).